The sequence spans 396 residues: Enoyl-[acyl-carrier-protein] reductase [NADH] (396 aa).

NAD(+) is bound by residues 47-52, 73-74, 110-111, and 138-139; these read GASTGF, FE, DA, and LA. Y224 serves as a coordination point for substrate. Y234 (proton donor) is an active-site residue. Residues K243 and 272 to 274 contribute to the NAD(+) site; that span reads LVT.

It belongs to the TER reductase family. Monomer.

It carries out the reaction a 2,3-saturated acyl-[ACP] + NAD(+) = a (2E)-enoyl-[ACP] + NADH + H(+). It participates in lipid metabolism; fatty acid biosynthesis. Functionally, involved in the final reduction of the elongation cycle of fatty acid synthesis (FAS II). Catalyzes the reduction of a carbon-carbon double bond in an enoyl moiety that is covalently linked to an acyl carrier protein (ACP). The polypeptide is Enoyl-[acyl-carrier-protein] reductase [NADH] (Flavobacterium johnsoniae (strain ATCC 17061 / DSM 2064 / JCM 8514 / BCRC 14874 / CCUG 350202 / NBRC 14942 / NCIMB 11054 / UW101) (Cytophaga johnsonae)).